The primary structure comprises 339 residues: Phenylalanine--tRNA ligase alpha subunit (339 aa).

Glutamate 250 lines the Mg(2+) pocket.

Belongs to the class-II aminoacyl-tRNA synthetase family. Phe-tRNA synthetase alpha subunit type 1 subfamily. In terms of assembly, tetramer of two alpha and two beta subunits. Mg(2+) is required as a cofactor.

It localises to the cytoplasm. It carries out the reaction tRNA(Phe) + L-phenylalanine + ATP = L-phenylalanyl-tRNA(Phe) + AMP + diphosphate + H(+). In Parabacteroides distasonis (strain ATCC 8503 / DSM 20701 / CIP 104284 / JCM 5825 / NCTC 11152), this protein is Phenylalanine--tRNA ligase alpha subunit.